The primary structure comprises 894 residues: Disease resistance protein SUMM2 (894 aa).

The stretch at 31 to 71 (ELSKNVVAMKKDMEVLKKKRDDVKRRVDIEEFTRRRERLSQ) forms a coiled coil. In terms of domain architecture, NB-ARC spans 140–443 (TLATPIARIE…CEGFIDENES (304 aa)). 183 to 190 (GMGGVGKT) is an ATP binding site. LRR repeat units follow at residues 517–538 (SVRR…PECL), 539–561 (ELTT…FFRC), 564–586 (MLVV…ISKL), 588–610 (SLRY…QELK), 611–633 (KLRY…SNIS), 634–656 (SLRK…EELQ), and 660–681 (HLEV…LNAP).

The protein belongs to the disease resistance NB-LRR family. Interacts with PAT1.

With respect to regulation, negatively regulated by the MEKK1-MKK1-MKK2-MPK4 kinase cascade. Its function is as follows. Disease resistance protein that mediates defense responses against the bacterial pathogen Pseudomonas syringae pv tomato strain DC3000, and the virulent oomycete Hyaloperonospora arabidopsidis isolate Noco2. Becomes active when the MEKK1-MKK1-MKK2-MPK4 kinase cascade is disrupted by the microbial effector hopAI1. Does not seem to be required for the activation of MPK4 by flg22, or flg22-induced up-regulation of PAD3. Functions downstream of MEKK2/SUMM1 in immune responses, including cell death and defense responses. This chain is Disease resistance protein SUMM2, found in Arabidopsis thaliana (Mouse-ear cress).